The following is a 202-amino-acid chain: uncharacterized protein (202 aa).

Lys136 is covalently cross-linked (Isoglutamyl lysine isopeptide (Lys-Gln) (interchain with Q-Cter in protein Pup)).

This is an uncharacterized protein from Mycobacterium tuberculosis (strain CDC 1551 / Oshkosh).